Consider the following 454-residue polypeptide: 3-phosphoshikimate 1-carboxyvinyltransferase (454 aa).

3-phosphoshikimate-binding residues include lysine 39, serine 40, and arginine 44. Lysine 39 contacts phosphoenolpyruvate. Residues glycine 112 and arginine 140 each contribute to the phosphoenolpyruvate site. Serine 185, glutamine 187, aspartate 333, and lysine 360 together coordinate 3-phosphoshikimate. Glutamine 187 contributes to the phosphoenolpyruvate binding site. Aspartate 333 acts as the Proton acceptor in catalysis. Residues arginine 364 and arginine 405 each coordinate phosphoenolpyruvate.

This sequence belongs to the EPSP synthase family. In terms of assembly, monomer.

It localises to the cytoplasm. It catalyses the reaction 3-phosphoshikimate + phosphoenolpyruvate = 5-O-(1-carboxyvinyl)-3-phosphoshikimate + phosphate. Its pathway is metabolic intermediate biosynthesis; chorismate biosynthesis; chorismate from D-erythrose 4-phosphate and phosphoenolpyruvate: step 6/7. Its function is as follows. Catalyzes the transfer of the enolpyruvyl moiety of phosphoenolpyruvate (PEP) to the 5-hydroxyl of shikimate-3-phosphate (S3P) to produce enolpyruvyl shikimate-3-phosphate and inorganic phosphate. The protein is 3-phosphoshikimate 1-carboxyvinyltransferase of Xylella fastidiosa (strain Temecula1 / ATCC 700964).